A 640-amino-acid polypeptide reads, in one-letter code: MEIENIVANTVYIKARESGGQKKGKSKKWKNYLQFPHYTECIPQKKENGEPYAFVVEKQPIGKLLFHEFCQATNPQYHQCCQFQTKVEEYETSDDDGQSRRDLASAIVALLSSKNDQDLSSSIDEEVWCAFLSDEVISTCISTADSATHDSEPRSDIFSEPYRLTREYLKQKPFAEFIQTMYFHRFLQWKWLEKRPVDKHTFRLYRVLGKGGFGEVCACQVRASGKMYALKKLEKKRVKKRHAETLSLNEKQILQKVNSPFVVSLAYAYETKDALCLVLTLMNGGDLKFHLYNLMPGGFDEKRVQFYAAEITLGLQHLHLEHILYRDLKPENILLDDFGHVRISDLGLAVELKDNEPIKGRVGTVGYMAPEIVKNERYTYGVDWWGVGCLIYEMIEGKAPFRQRKEKVKREEVERRVREDQEKYSEKFSEAARTLCRGLLHKEPGFRLGCRRVGKPEDGAEEIRAHPFFNTADTATGREPVPWKKMEAGKVTPPFCPDPRAVYAKDVLDIEQFSTVKGVRLDATDTQFYGKFNTGCVSIPWQSEMIETECFAELNTFYEEDGSLVWNLRPDGINMEERRNGTSKPGFFSRLFRKKNIEVTKSLHDLSRLGVDQQQPSTSAKPAAVRSSRAASASGRTSMI.

Residues 1–201 are N-terminal; that stretch reads MEIENIVANT…LEKRPVDKHT (201 aa). Residues 52–187 form the RGS domain; the sequence is YAFVVEKQPI…IQTMYFHRFL (136 aa). The 268-residue stretch at 202 to 469 folds into the Protein kinase domain; it reads FRLYRVLGKG…AEEIRAHPFF (268 aa). Residues 208 to 216 and Lys-231 contribute to the ATP site; that span reads LGKGGFGEV. Asp-327 serves as the catalytic Proton acceptor. Residues 479–544 enclose the AGC-kinase C-terminal domain; sequence EPVPWKKMEA…GCVSIPWQSE (66 aa). The interval 610–640 is disordered; the sequence is GVDQQQPSTSAKPAAVRSSRAASASGRTSMI. Positions 619 to 640 are enriched in low complexity; that stretch reads SAKPAAVRSSRAASASGRTSMI.

Belongs to the protein kinase superfamily. AGC Ser/Thr protein kinase family. GPRK subfamily.

It carries out the reaction [G-protein-coupled receptor] + ATP = [G-protein-coupled receptor]-phosphate + ADP + H(+). Its function is as follows. Specifically phosphorylates the activated forms of G protein-coupled receptors. In Caenorhabditis briggsae, this protein is G protein-coupled receptor kinase 1 (grk-1).